Reading from the N-terminus, the 287-residue chain is Phosphatidylserine decarboxylase proenzyme (287 aa).

Residues Asp-90, His-147, and Ser-252 each act as charge relay system; for autoendoproteolytic cleavage activity in the active site. Catalysis depends on Ser-252, which acts as the Schiff-base intermediate with substrate; via pyruvic acid; for decarboxylase activity. At Ser-252 the chain carries Pyruvic acid (Ser); by autocatalysis.

Belongs to the phosphatidylserine decarboxylase family. PSD-B subfamily. Prokaryotic type I sub-subfamily. As to quaternary structure, heterodimer of a large membrane-associated beta subunit and a small pyruvoyl-containing alpha subunit. Requires pyruvate as cofactor. Post-translationally, is synthesized initially as an inactive proenzyme. Formation of the active enzyme involves a self-maturation process in which the active site pyruvoyl group is generated from an internal serine residue via an autocatalytic post-translational modification. Two non-identical subunits are generated from the proenzyme in this reaction, and the pyruvate is formed at the N-terminus of the alpha chain, which is derived from the carboxyl end of the proenzyme. The autoendoproteolytic cleavage occurs by a canonical serine protease mechanism, in which the side chain hydroxyl group of the serine supplies its oxygen atom to form the C-terminus of the beta chain, while the remainder of the serine residue undergoes an oxidative deamination to produce ammonia and the pyruvoyl prosthetic group on the alpha chain. During this reaction, the Ser that is part of the protease active site of the proenzyme becomes the pyruvoyl prosthetic group, which constitutes an essential element of the active site of the mature decarboxylase.

It is found in the cell membrane. It catalyses the reaction a 1,2-diacyl-sn-glycero-3-phospho-L-serine + H(+) = a 1,2-diacyl-sn-glycero-3-phosphoethanolamine + CO2. It participates in phospholipid metabolism; phosphatidylethanolamine biosynthesis; phosphatidylethanolamine from CDP-diacylglycerol: step 2/2. Its function is as follows. Catalyzes the formation of phosphatidylethanolamine (PtdEtn) from phosphatidylserine (PtdSer). The protein is Phosphatidylserine decarboxylase proenzyme of Pseudomonas putida (strain ATCC 700007 / DSM 6899 / JCM 31910 / BCRC 17059 / LMG 24140 / F1).